The following is a 637-amino-acid chain: Chaperone protein HtpG (637 aa).

The tract at residues 1 to 345 is a; substrate-binding; the sequence is MSQQETHGFQ…SNDLPLNVSR (345 aa). The interval 346-562 is b; the sequence is EILQDNHITK…EGEMSSQMIK (217 aa). Positions 563 to 637 are c; it reads LMQAAGQPVP…MNQMLLANLK (75 aa).

It belongs to the heat shock protein 90 family. As to quaternary structure, homodimer.

It localises to the cytoplasm. Molecular chaperone. Has ATPase activity. This chain is Chaperone protein HtpG, found in Shewanella sp. (strain MR-4).